The following is a 983-amino-acid chain: Inner tegument protein (983 aa).

The interaction with large tegument protein stretch occupies residues 474 to 983; the sequence is LNVNTHFAVQ…TSVSLPPASP (510 aa). The tract at residues 901–932 is disordered; sequence APWESAPQPPRLRMTPDTDHEESTAGATSVPE. The span at 914–923 shows a compositional bias: basic and acidic residues; the sequence is MTPDTDHEES.

Belongs to the herpesviridae inner tegument protein family. In terms of assembly, interacts (via C-terminus) with the large tegument protein/LTP (via N-terminus).

It is found in the virion tegument. It localises to the host cytoplasm. The protein localises to the host nucleus. Its subcellular location is the host Golgi apparatus. The protein resides in the host trans-Golgi network. Plays an essential role in cytoplasmic secondary envelopment during viral egress. Interacts with the capsid via the large tegument protein/LTP and participates in its transport to the host trans-Golgi network (TGN) where secondary envelopment occurs. Modulates tegumentation and capsid accumulation at the viral assembly complex. This chain is Inner tegument protein (UL47), found in Homo sapiens (Human).